The sequence spans 1314 residues: Synergin gamma (1314 aa).

Residues 115 to 155 are a coiled coil; that stretch reads MQKQFAEEQQKRFEQQQKLLEEERKRRQFEEQKQKLRLLSS. The disordered stretch occupies residues 178–199; it reads GFSRDAKMHPTPASHPKKPGPS. An EH domain is found at 295–388; the sequence is NESLVPDAYK…QFPAAPIPTL (94 aa). A DFXDF motif 1 motif is present at residues 457-461; it reads DFQDF. Positions 460–498 are disordered; it reads DFQDASKSGSLDDSFSDFQELPASSKTSNSQHGNSAPSL. Polar residues predominate over residues 462–496; the sequence is QDASKSGSLDDSFSDFQELPASSKTSNSQHGNSAP. The residue at position 473 (serine 473) is a Phosphoserine. Lysine 513 is subject to N6-acetyllysine. The segment at 518-786 is interaction with AP1G1; that stretch reads KGIAADKSSE…ADFHSSKFSS (269 aa). Serine 580 carries the post-translational modification Phosphoserine. The segment at 666–678 is interaction with AP1G1, AP1G2 and GGA1; sequence LADDFGEFSLFGE. The short motif at 690–694 is the DFXDF motif 2 element; sequence DFADF. Serine 720 carries the phosphoserine modification. Lysine 744 bears the N6-acetyllysine mark. 2 positions are modified to phosphoserine: serine 752 and serine 772. The short motif at 775 to 779 is the DFXDF motif 3 element; sequence DFADF. Phosphoserine occurs at positions 812, 852, 855, 909, 919, and 935. Disordered regions lie at residues 972–1026 and 1073–1102; these read PQTS…DFGE and SLSL…NTLN. Over residues 976-990 the composition is skewed to basic and acidic residues; it reads EQKEYENRDYKDFTK. A compositionally biased stretch (polar residues) spans 1001 to 1019; the sequence is EATCPSPASSGASQETPNE. Phosphoserine occurs at positions 1006, 1073, 1075, 1087, and 1098. At threonine 1100 the chain carries Phosphothreonine.

In terms of assembly, self-associates. Interacts with GGA1 (via GAE domain). Interacts with GGA2 and GGA3. Interacts with AP1G1 (via GAE domain), a subunit of adapter protein complex AP-1. Interacts with AP1G2 (via GAE domain) a subunit of adapter protein complex AP-1. Component of the aftiphilin/p200/gamma-synergin complex, at least composed of AFTPH/aftiphilin, HEATR5B/p200a and SYNRG/gamma-synergin, which plays a role in the AP1G1/AP-1-mediated trafficking of transferrin from early to recycling endosomes. Within the complex interacts with AFTPH/aftiphilin and HEATR5B/p200a; the interactions are direct. Interacts (via EH domain) with SCAMP1.

The protein resides in the cytoplasm. The protein localises to the golgi apparatus. It is found in the trans-Golgi network membrane. It localises to the perinuclear region. Its subcellular location is the cytoplasmic vesicle. The protein resides in the clathrin-coated vesicle. Functionally, plays a role in endocytosis and/or membrane trafficking at the trans-Golgi network (TGN). May act by linking the adapter protein complex AP-1 to other proteins. Component of clathrin-coated vesicles. Component of the aftiphilin/p200/gamma-synergin complex, which plays roles in AP1G1/AP-1-mediated protein trafficking including the trafficking of transferrin from early to recycling endosomes, and the membrane trafficking of furin and the lysosomal enzyme cathepsin D between the trans-Golgi network (TGN) and endosomes. This is Synergin gamma from Homo sapiens (Human).